The following is an 88-amino-acid chain: Large ribosomal subunit protein bL31B (88 aa).

The protein belongs to the bacterial ribosomal protein bL31 family. Type B subfamily. Part of the 50S ribosomal subunit.

The sequence is that of Large ribosomal subunit protein bL31B from Corynebacterium diphtheriae (strain ATCC 700971 / NCTC 13129 / Biotype gravis).